A 354-amino-acid chain; its full sequence is Endo-1,4-beta-xylanase 1 (354 aa).

Residues 19-339 form the GH10 domain; sequence SGLDAAMKAA…KPSYTSSLNT (321 aa). N-linked (GlcNAc...) asparagine glycosylation is present at Asn-117. Glu-147 serves as the catalytic Proton donor. Catalysis depends on Glu-261, which acts as the Nucleophile. Cys-289 and Cys-295 form a disulfide bridge.

Belongs to the glycosyl hydrolase 10 (cellulase F) family.

The protein localises to the secreted. The catalysed reaction is Endohydrolysis of (1-&gt;4)-beta-D-xylosidic linkages in xylans.. It functions in the pathway glycan degradation; xylan degradation. In terms of biological role, endo-1,4-beta-xylanase involved in the hydrolysis of xylan, a major structural heterogeneous polysaccharide found in plant biomass representing the second most abundant polysaccharide in the biosphere, after cellulose. Plays an important role in causing fusarium head blight (FHB) on cereal crops. This is Endo-1,4-beta-xylanase 1 (XYL1) from Gibberella zeae (strain ATCC MYA-4620 / CBS 123657 / FGSC 9075 / NRRL 31084 / PH-1) (Wheat head blight fungus).